Here is a 123-residue protein sequence, read N- to C-terminus: Small ribosomal subunit protein eS8 (123 aa).

A disordered region spans residues 1-38 (MKDQGRSPRKRTGGRRRPNHKKKKHELGKDTVETQVGE). Over residues 7 to 26 (SPRKRTGGRRRPNHKKKKHE) the composition is skewed to basic residues.

In terms of assembly, part of the 30S ribosomal subunit.

This Haloarcula marismortui (strain ATCC 43049 / DSM 3752 / JCM 8966 / VKM B-1809) (Halobacterium marismortui) protein is Small ribosomal subunit protein eS8 (rps8e).